We begin with the raw amino-acid sequence, 548 residues long: CTP synthase (548 aa).

The amidoligase domain stretch occupies residues 1-270; that stretch reads MNRRSCAFIF…DTKISALLGC (270 aa). Residue S17 participates in CTP binding. S17 contributes to the UTP binding site. Residues 18 to 23 and D75 each bind ATP; that span reads SIGKGL. Residues D75 and E143 each coordinate Mg(2+). CTP contacts are provided by residues 150-152, 190-195, and K227; these read DIE and KTKPSQ. UTP is bound by residues 190-195 and K227; that span reads KTKPSQ. In terms of domain architecture, Glutamine amidotransferase type-1 spans 305 to 548; that stretch reads YSGLCDAYIS…VRAGLLRKYS (244 aa). L-glutamine is bound at residue G356. C383 serves as the catalytic Nucleophile; for glutamine hydrolysis. L-glutamine-binding positions include 384–387, E407, and R475; that span reads FGFQ. Catalysis depends on residues H521 and E523.

It belongs to the CTP synthase family. In terms of assembly, homotetramer.

The enzyme catalyses UTP + L-glutamine + ATP + H2O = CTP + L-glutamate + ADP + phosphate + 2 H(+). It catalyses the reaction L-glutamine + H2O = L-glutamate + NH4(+). It carries out the reaction UTP + NH4(+) + ATP = CTP + ADP + phosphate + 2 H(+). It participates in pyrimidine metabolism; CTP biosynthesis via de novo pathway; CTP from UDP: step 2/2. Allosterically activated by GTP, when glutamine is the substrate; GTP has no effect on the reaction when ammonia is the substrate. The allosteric effector GTP functions by stabilizing the protein conformation that binds the tetrahedral intermediate(s) formed during glutamine hydrolysis. Inhibited by the product CTP, via allosteric rather than competitive inhibition. Its function is as follows. Catalyzes the ATP-dependent amination of UTP to CTP with either L-glutamine or ammonia as the source of nitrogen. Regulates intracellular CTP levels through interactions with the four ribonucleotide triphosphates. The chain is CTP synthase from Neorickettsia sennetsu (strain ATCC VR-367 / Miyayama) (Ehrlichia sennetsu).